A 75-amino-acid chain; its full sequence is MARFFRRRKFCRFTAEDVQEIDYKDVVTLKNYITEAGKIVPSRITGTRAKYQRQLARAIKRSRYLALLPYTDKHL.

The protein belongs to the bacterial ribosomal protein bS18 family. Part of the 30S ribosomal subunit. Forms a tight heterodimer with protein bS6.

In terms of biological role, binds as a heterodimer with protein bS6 to the central domain of the 16S rRNA, where it helps stabilize the platform of the 30S subunit. The sequence is that of Small ribosomal subunit protein bS18 from Photobacterium profundum (strain SS9).